The primary structure comprises 434 residues: Protein maelstrom homolog (434 aa).

The HMG box DNA-binding region spans 4–73 (RKASRNAYYF…AQGKDPGPSE (70 aa)). The segment at 357–385 (SHFNSSNEEQRSNTPIGDYPSRAKISGQN) is disordered.

It belongs to the maelstrom family. As to quaternary structure, interacts with SMARCB1, SIN3B and DDX4. Interacts with piRNA-associated proteins TDRD1, PIWIL1 and PIWIL2. Interacts with TEX19. As to expression, testis-specific. Expressed in various cancer cell lines, probably due to demethylation of its promoter.

The protein localises to the cytoplasm. The protein resides in the nucleus. In terms of biological role, plays a central role during spermatogenesis by repressing transposable elements and preventing their mobilization, which is essential for the germline integrity. Acts via the piRNA metabolic process, which mediates the repression of transposable elements during meiosis by forming complexes composed of piRNAs and Piwi proteins and governs the methylation and subsequent repression of transposons. Its association with piP-bodies suggests a participation in the secondary piRNAs metabolic process. Required for the localization of germ-cell factors to the meiotic nuage. The protein is Protein maelstrom homolog (MAEL) of Homo sapiens (Human).